The chain runs to 241 residues: Enolase-phosphatase E1 (241 aa).

2 residues coordinate Mg(2+): D9 and E11. Residues 133-134 and K172 contribute to the substrate site; that span reads SS. D198 serves as a coordination point for Mg(2+).

Belongs to the HAD-like hydrolase superfamily. MasA/MtnC family. Monomer. Mg(2+) is required as a cofactor.

The protein resides in the cytoplasm. It localises to the nucleus. The catalysed reaction is 5-methylsulfanyl-2,3-dioxopentyl phosphate + H2O = 1,2-dihydroxy-5-(methylsulfanyl)pent-1-en-3-one + phosphate. The protein operates within amino-acid biosynthesis; L-methionine biosynthesis via salvage pathway; L-methionine from S-methyl-5-thio-alpha-D-ribose 1-phosphate: step 3/6. Its pathway is amino-acid biosynthesis; L-methionine biosynthesis via salvage pathway; L-methionine from S-methyl-5-thio-alpha-D-ribose 1-phosphate: step 4/6. In terms of biological role, bifunctional enzyme that catalyzes the enolization of 2,3-diketo-5-methylthiopentyl-1-phosphate (DK-MTP-1-P) into the intermediate 2-hydroxy-3-keto-5-methylthiopentenyl-1-phosphate (HK-MTPenyl-1-P), which is then dephosphorylated to form the acireductone 1,2-dihydroxy-3-keto-5-methylthiopentene (DHK-MTPene). The polypeptide is Enolase-phosphatase E1 (Scheffersomyces stipitis (strain ATCC 58785 / CBS 6054 / NBRC 10063 / NRRL Y-11545) (Yeast)).